The primary structure comprises 508 residues: Transcription termination factor MTERF4, chloroplastic (508 aa).

The N-terminal 79 residues, 1–79 (MMKSLFLFSA…PSLLDMERGR (79 aa)), are a transit peptide targeting the chloroplast. Residues 28–49 (RLTASASTSASSPPRAGCSRGP) show a composition bias toward low complexity. 2 disordered regions span residues 28 to 69 (RLTA…LYAR) and 475 to 508 (FDTN…EFIE). Acidic residues predominate over residues 484–508 (VEDEVEDEDLDEDSDYDSTDDEFIE).

It belongs to the mTERF family.

It is found in the plastid. The protein resides in the chloroplast stroma. Its function is as follows. Transcription termination factor required for processing and steady-state levels of plastid transcripts. Required for splicing of the chloroplastic group II intron. Required for the accumulation of 16S and 23S ribosomes. In Oryza sativa subsp. japonica (Rice), this protein is Transcription termination factor MTERF4, chloroplastic.